Reading from the N-terminus, the 178-residue chain is Large ribosomal subunit protein uL6 (178 aa).

It belongs to the universal ribosomal protein uL6 family. In terms of assembly, part of the 50S ribosomal subunit.

Functionally, this protein binds to the 23S rRNA, and is important in its secondary structure. It is located near the subunit interface in the base of the L7/L12 stalk, and near the tRNA binding site of the peptidyltransferase center. This Kocuria rhizophila (strain ATCC 9341 / DSM 348 / NBRC 103217 / DC2201) protein is Large ribosomal subunit protein uL6.